We begin with the raw amino-acid sequence, 842 residues long: Cullin-8 (842 aa).

The segment at 1–50 (MINESVSKREGFHESISRETSASNALGLYNKFNDERNPRYRTMIAELHEF) is required for interaction with MMS1. The span at 755–765 (LQSSNTGGERT) shows a compositional bias: polar residues. The tract at residues 755–775 (LQSSNTGGERTSSAHHEGSNS) is disordered. Lysine 791 is covalently cross-linked (Glycyl lysine isopeptide (Lys-Gly) (interchain with G-Cter in NEDD8)).

It belongs to the cullin family. As to quaternary structure, component of multiple cullin-RING ligases (CRLs) composed of 4 subunits: the RING protein HRT1, the cullin RTT101, a linker protein MMS1, and one of many alternative substrate receptors belonging to a protein family described as DCAF (DDB1- and CUL4-associated factor). Component of a RTT101(MMS1-MMS22) complex with the substrate receptor MMS22. This complex further interacts with RTT107 and CTF4 to form RTT101-MMS1-MMS22-RTT107 and RTT101-MMS1-MMS22-CTF4 complexes respectively. Component of a RTT101(MSS1-CRT10) complex with the substrate receptor CRT10. Component of a RTT101(MSS1-ESC2) complex with the potential substrate receptor ESC2. Component of a RTT101(MSS1-ORC5) complex with the potential substrate receptor ORC5. Interacts (via C-ter) with HRT1; required for ubiquitin-ligase activity. Interacts (via N-ter) with MMS1. Post-translationally, neddylated. HRT1-binding is necessary for RUB1/NEDD8 modification of RTT101. The modification enhances ubiquitin-ligase activity.

It is found in the cytoplasm. Its subcellular location is the nucleus. The protein operates within protein modification; protein ubiquitination. Its function is as follows. Core component of multiple cullin-RING-based E3 ubiquitin-protein ligase complexes (CRLs), which mediate the ubiquitination of target proteins. As a scaffold protein may contribute to catalysis through positioning of the substrate and the ubiquitin-conjugating enzyme. The CRL associates with CDC34 as the E2 ubiquitin-conjugating enzyme. The functional specificity of the CRL depends on the type of the associated substrate receptor protein. RTT101(MMS1-MMS22) promotes fork progression through damaged DNA or natural pause sites by stabilizing replication proteins like the replication fork-pausing complex (FPC) and leading-strand polymerase at stalled replication forks. RTT101(MMS1-MMS22) ubiquitinates the acetylated histones H3K56ac-H4 at lysine residues H3K121, H3K122 and H3K125. Ubiquitination is required for efficient histone deposition during replication-coupled nucleosome assembly, probably by facilitating the transfer of H3-H4 from ASF1 to other chaperones involved in histone deposition. RTT101(MMS1-CRT10) may regulate nucleotide synthesis through transcriptional regulation of ribonucleotide reductase. RTT101(MMS1) is also involved in the non-functional rRNA decay (NRD) of 25S rRNA through the selective, ubiquitination-dependent degradation of nonfunctional ribosomal particles. Ubiquitinates the FACT (facilitates chromatin transcription) complex subunit SPT16 in an MMS1-independent manner. Involved in regulation of Ty1 transposition and protects the genome from Ty1 integration upstream of tRNA genes. In Saccharomyces cerevisiae (strain ATCC 204508 / S288c) (Baker's yeast), this protein is Cullin-8 (RTT101).